A 513-amino-acid chain; its full sequence is ATP synthase subunit alpha (513 aa).

169-176 (GDRQTGKT) lines the ATP pocket.

The protein belongs to the ATPase alpha/beta chains family. F-type ATPases have 2 components, CF(1) - the catalytic core - and CF(0) - the membrane proton channel. CF(1) has five subunits: alpha(3), beta(3), gamma(1), delta(1), epsilon(1). CF(0) has three main subunits: a(1), b(2) and c(9-12). The alpha and beta chains form an alternating ring which encloses part of the gamma chain. CF(1) is attached to CF(0) by a central stalk formed by the gamma and epsilon chains, while a peripheral stalk is formed by the delta and b chains.

The protein resides in the cell inner membrane. The enzyme catalyses ATP + H2O + 4 H(+)(in) = ADP + phosphate + 5 H(+)(out). Its function is as follows. Produces ATP from ADP in the presence of a proton gradient across the membrane. The alpha chain is a regulatory subunit. In Glaesserella parasuis serovar 5 (strain SH0165) (Haemophilus parasuis), this protein is ATP synthase subunit alpha.